A 292-amino-acid polypeptide reads, in one-letter code: uncharacterized protein (292 aa).

The chain crosses the membrane as a helical span at residues Ser17–Met37.

The protein to M.jannaschii MJ0137.

The protein resides in the membrane. This is an uncharacterized protein from Methanocaldococcus jannaschii (strain ATCC 43067 / DSM 2661 / JAL-1 / JCM 10045 / NBRC 100440) (Methanococcus jannaschii).